The primary structure comprises 576 residues: FACT complex subunit pob3 (576 aa).

3 disordered regions span residues 153-172 (ADAN…KAAS), 193-213 (KGIK…EGEE), and 490-576 (MGSS…KVGK). Basic and acidic residues predominate over residues 193–203 (KGIKEENGKEE). Residues 204–213 (NGEEEEEGEE) show a composition bias toward acidic residues. Residues 496 to 505 (EGVRADRGSA) show a composition bias toward basic and acidic residues. 2 stretches are compositionally biased toward acidic residues: residues 506-528 (DEDE…AEEY) and 542-564 (EMND…DMSE).

Belongs to the SSRP1 family. As to quaternary structure, forms a stable heterodimer with spt16. The spt16-pob3 dimer weakly associates with multiple molecules of nhp6 to form the FACT complex.

The protein localises to the nucleus. It localises to the chromosome. Functionally, component of the FACT complex, a general chromatin factor that acts to reorganize nucleosomes. The FACT complex is involved in multiple processes that require DNA as a template such as mRNA elongation, DNA replication and DNA repair. During transcription elongation the FACT complex acts as a histone chaperone that both destabilizes and restores nucleosomal structure. It facilitates the passage of RNA polymerase II and transcription by promoting the dissociation of one histone H2A-H2B dimer from the nucleosome, then subsequently promotes the reestablishment of the nucleosome following the passage of RNA polymerase II. In Aspergillus oryzae (strain ATCC 42149 / RIB 40) (Yellow koji mold), this protein is FACT complex subunit pob3 (pob3).